A 104-amino-acid polypeptide reads, in one-letter code: MSEVRKNDHRLMQVLLAPVISEKATLVAEKNEQVVFEVAPDATKQEVKAAVELLFKVEVNSVNVLVQKGKAKRFGRFMGKRKDVKKAYVCLKPGQEINFEAEAK.

This sequence belongs to the universal ribosomal protein uL23 family. In terms of assembly, part of the 50S ribosomal subunit. Contacts protein L29, and trigger factor when it is bound to the ribosome.

One of the early assembly proteins it binds 23S rRNA. One of the proteins that surrounds the polypeptide exit tunnel on the outside of the ribosome. Forms the main docking site for trigger factor binding to the ribosome. The protein is Large ribosomal subunit protein uL23 of Paraburkholderia phymatum (strain DSM 17167 / CIP 108236 / LMG 21445 / STM815) (Burkholderia phymatum).